The primary structure comprises 701 residues: Arachidonate 12-lipoxygenase, 12R-type (701 aa).

A PLAT domain is found at 2-119; the sequence is ATYKVKVATG…TLALREATGK (118 aa). One can recognise a Lipoxygenase domain in the interval 120–701; sequence ITADDTLPIL…PVLIENSISI (582 aa). Fe cation-binding residues include His-398, His-403, His-578, Asn-582, and Ile-701.

This sequence belongs to the lipoxygenase family. It depends on Fe cation as a cofactor. Expressed in skin epidermis and other stratified epithelia including tongue and forestomach. Low levels of expression are found in trachea, brain and lung. Not expressed in intestine, liver, kidney, adipose tissue, muscle or hematopoietic cells.

Its subcellular location is the cytoplasm. It localises to the perinuclear region. It carries out the reaction 1-O-methyl-(5Z,8Z,11Z,14Z)-eicosatetraenoate + O2 = 1-O-methyl (5Z,8Z,10E,12R,14Z)-hydroperoxyiecosatetraenoate. The enzyme catalyses 1-O-methyl-(5Z,8Z,11Z,14Z)-eicosatetraenoate + O2 = 1-O-methyl-8-hydroperoxy-(5Z,9E,11Z,14Z)-eicosatetraenoate. The catalysed reaction is (5Z,8Z,11Z,14Z)-eicosatetraenoate + O2 = (12R)-hydroperoxy-(5Z,8Z,10E,14Z)-eicosatetraenoate. It catalyses the reaction N-[omega-(9Z,12Z)-octadecadienoyloxy]acyl-beta-D-glucosyl-(1&lt;-&gt;1)-octadecasphing-4E-enine + O2 = N-[omega-(9R)-hydroperoxy-(10E,12Z)-octadecadienoyloxy]acyl-beta-D-glucosyl-(1&lt;-&gt;1)-octadecasphing-4E-enine. It carries out the reaction a N-[omega-(9Z,12Z)-octadecadienoyloxy]-acylsphin-4E-enine + O2 = a N-[omega-(9R)-hydroperoxy-(10E,12Z)-octadecadienoyloxy]-acylsphin-4E-enine. The enzyme catalyses (6Z,9Z,12Z)-octadecatrienoate + O2 = 10-hydroperoxy-(6Z,8E,12Z)-octadecatrienoate. The catalysed reaction is (4Z,7Z,10Z,13Z,16Z,19Z)-docosahexaenoate + O2 = 14-hydroperoxy-(4Z,7Z,10Z,12E,16Z,19Z)-docosahexaenoate. It catalyses the reaction (8Z,11Z,14Z)-eicosatrienoate + O2 = (8Z,10E,14Z)-12-hydroperoxyeicosatrienoate. It carries out the reaction (5Z,8Z,11Z,14Z,17Z)-eicosapentaenoate + O2 = (5Z,7Z,8Z,10E,14Z,17Z)-12-hydroperoxyeicosapentaenoate. The enzyme catalyses (6Z,9Z,12Z)-octadecatrienoate + O2 = 10R-hydroperoxy-(6Z,8E,12Z)-octadecatrienoate. The catalysed reaction is 1-O-methyl-(5Z,8Z,11Z,14Z)-eicosatetraenoate + O2 = 1-O-methyl-(8R)-hydroperoxy-(5Z,9E,11Z,14Z)-eicosatrienoate. It catalyses the reaction 1-O-methyl-(9Z,12Z)-octadecadienoate + O2 = 1-O-methyl-(9R)-hydroperoxy-(10E,12Z)-octadecadienoate. It carries out the reaction 1-O-methyl-20-hydroxy-(5Z,8Z,11Z,14Z)-eicosatetraenoate + O2 = 1-O-methyl-8-hydroperoxy-20-hydroxy-(5Z,9E,11Z,14Z)-eicosatetraenoate. The enzyme catalyses 1-O-methyl-20-hydroxy-(5Z,8Z,11Z,14Z)-eicosatetraenoate + O2 = 1-O-methyl-12-hydroperoxy-20-hydroxy-(5Z,8Z,10E,14Z)-eicosatetraenoate. The catalysed reaction is 1-O-methyl-20-hydroxy-(5Z,8Z,11Z,14Z)-eicosatetraenoate + O2 = 1-O-methyl-9-hydroperoxy-20-hydroxy-(5Z,7E,11Z,14Z)-eicosatetraenoate. It catalyses the reaction 1-O-methyl-(9Z,12Z)-octadecadienoate + O2 = 1-O-methyl-(13S)-hydroperoxy-(9Z,11E)-octadecadienoate. The protein operates within lipid metabolism; hydroperoxy eicosatetraenoic acid biosynthesis. It functions in the pathway lipid metabolism; sphingolipid metabolism. Its activity is regulated as follows. Increased by calcium. Catalyzes the regio and stereo-specific incorporation of a single molecule of dioxygen into free and esterified polyunsaturated fatty acids generating lipid hydroperoxides that can be further reduced to the corresponding hydroxy species. Does not convert arachidonic acid to (12R)-hydroperoxyeicosatetraenoic acid/(12R)-HPETE. In the skin, acts upstream of ALOXE3 on the lineolate moiety of esterified omega-hydroxyacyl-sphingosine (EOS) ceramides to produce an epoxy-ketone derivative, a crucial step in the conjugation of omega-hydroxyceramide to membrane proteins. Therefore plays a crucial role in the synthesis of corneocytes lipid envelope and the establishment of the skin barrier to water loss. May also play a role in the regulation of the expression of airway mucins. The protein is Arachidonate 12-lipoxygenase, 12R-type of Mus musculus (Mouse).